The following is a 597-amino-acid chain: Lipoprotein LpqB (597 aa).

The first 28 residues, 1-28, serve as a signal peptide directing secretion; sequence MTPGRRSALLSRSVCGAIVLAVLVTVSG. Residue cysteine 29 is the site of N-palmitoyl cysteine attachment. The S-diacylglycerol cysteine moiety is linked to residue cysteine 29. Positions 38 to 51 are enriched in polar residues; it reads PQAIGTINRDSPGS. The interval 38-58 is disordered; it reads PQAIGTINRDSPGSSVAAPAP.

The protein belongs to the LpqB lipoprotein family.

Its subcellular location is the cell membrane. The polypeptide is Lipoprotein LpqB (Rhodococcus jostii (strain RHA1)).